We begin with the raw amino-acid sequence, 351 residues long: SH3 domain-containing protein 3 (351 aa).

Coiled-coil stretches lie at residues 1 to 21 and 193 to 213; these read MDAF…QQLA and LQLA…LGKE. In terms of domain architecture, BAR spans 31-267; it reads YESSDVMVID…MVTEKQHKES (237 aa). Residues 281 to 340 form the SH3 domain; the sequence is TSYFLAEVIHPFSAASEKELDLDKGDYIVVRKVSQTGWAEGECKGKAGWFPMAYIEKRQR.

Interacts with FREE1. Interacts (via SH3 domain) with DRP2A/ADL6. Binds to SH3P2. As to expression, detected in all tissues except seedlings.

It localises to the cytoplasmic vesicle. It is found in the clathrin-coated vesicle. Its function is as follows. May be involved in the recruitment of DRP2A to the accessory protein complex and in the negative regulation of its GTPase activity. In Arabidopsis thaliana (Mouse-ear cress), this protein is SH3 domain-containing protein 3.